The chain runs to 1362 residues: DNA-directed RNA polymerase subunit beta (1362 aa).

The protein belongs to the RNA polymerase beta chain family. The RNAP catalytic core consists of 2 alpha, 1 beta, 1 beta' and 1 omega subunit. When a sigma factor is associated with the core the holoenzyme is formed, which can initiate transcription.

It catalyses the reaction RNA(n) + a ribonucleoside 5'-triphosphate = RNA(n+1) + diphosphate. In terms of biological role, DNA-dependent RNA polymerase catalyzes the transcription of DNA into RNA using the four ribonucleoside triphosphates as substrates. The protein is DNA-directed RNA polymerase subunit beta of Acidithiobacillus ferrooxidans (strain ATCC 23270 / DSM 14882 / CIP 104768 / NCIMB 8455) (Ferrobacillus ferrooxidans (strain ATCC 23270)).